We begin with the raw amino-acid sequence, 349 residues long: Sphingolipid C4-hydroxylase SUR2 (349 aa).

The next 5 helical transmembrane spans lie at 9-29 (AAGSFPLAFGLKTSFGFMHYA), 50-70 (VLALVAPVVAYWALSGIFHVI), 99-119 (FLEVILQHIIQTIVGLIFMHF), 148-168 (IYYGYMYGMSALKIFAGFLFV), and 209-229 (PVEGFLLDTLGTGIAMTLTHL). In terms of domain architecture, Fatty acid hydroxylase spans 162–297 (FAGFLFVDTW…FTFWDNLFQT (136 aa)).

This sequence belongs to the sterol desaturase family.

The protein localises to the endoplasmic reticulum membrane. The enzyme catalyses sphinganine + 2 Fe(II)-[cytochrome b5] + O2 + 2 H(+) = (4R)-hydroxysphinganine + 2 Fe(III)-[cytochrome b5] + H2O. The catalysed reaction is an N-acylsphinganine + 2 Fe(II)-[cytochrome b5] + O2 + 2 H(+) = an N-acyl-(4R)-4-hydroxysphinganine + 2 Fe(III)-[cytochrome b5] + H2O. It catalyses the reaction an N-acyleicosasphinganine + 2 Fe(II)-[cytochrome b5] + O2 + 2 H(+) = N-acyl-4-hydroxyeicosasphinganine + 2 Fe(III)-[cytochrome b5] + H2O. It functions in the pathway membrane lipid metabolism; sphingolipid biosynthesis. Required for hydroxylation of C-4 in the sphingoid moiety of ceramide. Catalyzes the conversion of sphinganine to phytosphingosine in sphingolipid biosynthesis. Involved in the response to syringomycin. This Saccharomyces cerevisiae (strain ATCC 204508 / S288c) (Baker's yeast) protein is Sphingolipid C4-hydroxylase SUR2 (SUR2).